Here is a 308-residue protein sequence, read N- to C-terminus: uncharacterized protein (308 aa).

The segment at 19–43 is disordered; sequence EPQASGAGPAQTPPPVTVPMTPPSK. The span at 29–43 shows a compositional bias: pro residues; that stretch reads QTPPPVTVPMTPPSK.

This is an uncharacterized protein from Deinococcus radiodurans (strain ATCC 13939 / DSM 20539 / JCM 16871 / CCUG 27074 / LMG 4051 / NBRC 15346 / NCIMB 9279 / VKM B-1422 / R1).